We begin with the raw amino-acid sequence, 90 residues long: DNA-binding protein HU-alpha (90 aa).

It belongs to the bacterial histone-like protein family. In terms of assembly, heterodimer of an alpha and a beta chain.

Functionally, histone-like DNA-binding protein which is capable of wrapping DNA to stabilize it, and thus to prevent its denaturation under extreme environmental conditions. This is DNA-binding protein HU-alpha (hupA) from Escherichia coli O157:H7.